The following is a 303-amino-acid chain: D-alanine--D-alanine ligase (303 aa).

The ATP-grasp domain occupies 102–298; the sequence is RILLAAAGLP…YPELCDWMVR (197 aa). 128-181 contacts ATP; that stretch reads PLPAPYVIKPVAEGSSVGVEIVRTGDNRRAEIARTWRFGKEALVESFIPGRELT. Mg(2+) is bound by residues Asp-251, Glu-265, and Asn-267.

The protein belongs to the D-alanine--D-alanine ligase family. Requires Mg(2+) as cofactor. It depends on Mn(2+) as a cofactor.

The protein localises to the cytoplasm. It carries out the reaction 2 D-alanine + ATP = D-alanyl-D-alanine + ADP + phosphate + H(+). The protein operates within cell wall biogenesis; peptidoglycan biosynthesis. In terms of biological role, cell wall formation. The polypeptide is D-alanine--D-alanine ligase (Gluconobacter oxydans (strain 621H) (Gluconobacter suboxydans)).